The chain runs to 791 residues: Outer membrane protein assembly factor BamA (791 aa).

POTRA domains are found at residues 59-130 (NAIA…VTEK), 131-209 (PRID…VEEG), 212-298 (LYIK…VKEG), 301-383 (YKLG…IRKR), and 386-459 (VYIN…VKEQ).

It belongs to the BamA family. In terms of assembly, part of the Bam complex.

It localises to the cell outer membrane. Part of the outer membrane protein assembly complex, which is involved in assembly and insertion of beta-barrel proteins into the outer membrane. The chain is Outer membrane protein assembly factor BamA from Nitratidesulfovibrio vulgaris (strain ATCC 29579 / DSM 644 / CCUG 34227 / NCIMB 8303 / VKM B-1760 / Hildenborough) (Desulfovibrio vulgaris).